The chain runs to 690 residues: Glycine--tRNA ligase beta subunit (690 aa).

This sequence belongs to the class-II aminoacyl-tRNA synthetase family. As to quaternary structure, tetramer of two alpha and two beta subunits.

Its subcellular location is the cytoplasm. It carries out the reaction tRNA(Gly) + glycine + ATP = glycyl-tRNA(Gly) + AMP + diphosphate. The protein is Glycine--tRNA ligase beta subunit of Syntrophus aciditrophicus (strain SB).